A 398-amino-acid polypeptide reads, in one-letter code: uncharacterized protein (398 aa).

This sequence belongs to the class-V pyridoxal-phosphate-dependent aminotransferase family. Homodimer.

Functionally, is essential for optimal growth. This is an uncharacterized protein from Mycobacterium tuberculosis (strain CDC 1551 / Oshkosh).